Consider the following 858-residue polypeptide: DNA mismatch repair protein MutS (858 aa).

An ATP-binding site is contributed by 613–620; it reads GPNMAGKS.

It belongs to the DNA mismatch repair MutS family.

In terms of biological role, this protein is involved in the repair of mismatches in DNA. It is possible that it carries out the mismatch recognition step. This protein has a weak ATPase activity. This chain is DNA mismatch repair protein MutS, found in Dehalococcoides mccartyi (strain ATCC BAA-2266 / KCTC 15142 / 195) (Dehalococcoides ethenogenes (strain 195)).